The chain runs to 111 residues: Putative pterin-4-alpha-carbinolamine dehydratase (111 aa).

It belongs to the pterin-4-alpha-carbinolamine dehydratase family.

The enzyme catalyses (4aS,6R)-4a-hydroxy-L-erythro-5,6,7,8-tetrahydrobiopterin = (6R)-L-erythro-6,7-dihydrobiopterin + H2O. The sequence is that of Putative pterin-4-alpha-carbinolamine dehydratase from Chlorobaculum tepidum (strain ATCC 49652 / DSM 12025 / NBRC 103806 / TLS) (Chlorobium tepidum).